Here is a 211-residue protein sequence, read N- to C-terminus: MADS-box protein AGL72 (211 aa).

An MADS-box domain is found at 1-61 (MVRGKIEIKK…GRLYEFASSD (61 aa)). The K-box domain occupies 88-187 (VQGLKKEMVT…LCQVGERPMG (100 aa)).

The protein localises to the nucleus. Its function is as follows. MADS-box transcription factor that acts with AGL42 and AGL71 in the control of flowering time. Promotes flowering at the shoot apical and axillary meristems. Seems to act through a gibberellin-dependent pathway. Interacts genetically with SOC1 and its expression is directly regulated by SOC1. This Arabidopsis thaliana (Mouse-ear cress) protein is MADS-box protein AGL72 (AGL72).